The following is a 403-amino-acid chain: MLTTLIYRSHIRDDEPVKKIEEMVSIANRRNMQSDVTGILLFNGSHFFQLLEGPEEQVKMIYRAICQDPRHYNIVELLCDYAPARRFGKAGMELFDLRLHERDDVLQAVFDKGTSKFQLTYDDRALQFFRTFVLATEQSTYFEIPAEDSWLFIADGSDKELDSCALSPTINDHFAFHPIVDPLSRRIIAFEAIVQKNEDSPSAIAVGQRKDGEIYTADLKSKALAFTMAHALELGDKMISINLLPMTLVNEPDAVSFLLNEIKANALVPEQIIVEFTESEVISRFDEFAEAIKSLKAAGISVAIDHFGAGFAGLLLLSRFQPDRIKISQELITNVHKSGPRQAIIQAIIKCCTSLEIQVSAMGVATPEEWMWLESAGIEMFQGDLFAKAKLNGIPSIAWPEKK.

One can recognise a BLUF domain in the interval 2 to 93 (LTTLIYRSHI…ARRFGKAGME (92 aa)). Residues 98 to 144 (RLHERDDVLQAVFDKGTSKFQLTYDDRALQFFRTFVLATEQSTYFEI) are joining helix. The EAL domain maps to 155 to 403 (DGSDKELDSC…IPSIAWPEKK (249 aa)).

As to quaternary structure, monomer, it undergoes transient dimerization following photoexcitation or upon temperature reduction, with a relaxation time of about 2 minutes. The dimer may be the inactive state. Interacts with the N- and C-terminal domains of BluR. Can also interact with the C-terminal domain of MlrA. Requires FAD as cofactor.

Its function is as follows. Binds to and releases the BluR repressor from its bound DNA target in a blue light-dependent (470 nm) fashion. A shift to low temperature also triggers a BluF-mediated relief of repression by BluR, suggesting BluF may serve as a thermometer. Blue light may act to increase the affinity of BluF for BluR, allowing it to be released from its operator. The protein has a reversible photocycle, and undergoes structural changes, probably in the EAL domain, in response to light. The protein is Blue light- and temperature-regulated antirepressor BluF of Escherichia coli (strain K12).